The primary structure comprises 597 residues: NADPH-dependent diflavin oxidoreductase 1 (597 aa).

Positions 6-150 (LLVLFGSQTG…AVDPWLRDLW (145 aa)) constitute a Flavodoxin-like domain. FMN is bound by residues 12 to 17 (SQTGTA), 59 to 62 (ATTG), 97 to 106 (LGDSSYAKFN), and Asp132. The segment at 188-207 (GSEGQRVAHPGSQEPPSESK) is disordered. The FAD-binding FR-type domain occupies 206–447 (SKPFLAPMIS…VRPGSLAFPE (242 aa)). FAD is bound by residues Arg350, 382–385 (RAFS), and 416–419 (GLCS). Residues Thr460, 515–516 (SR), 521–525 (KVYVQ), and Asp558 contribute to the NADP(+) site. Trp596 contacts FAD.

This sequence belongs to the NADPH-dependent diflavin oxidoreductase NDOR1 family. The protein in the N-terminal section; belongs to the flavodoxin family. In the C-terminal section; belongs to the flavoprotein pyridine nucleotide cytochrome reductase family. Interacts with CIAPIN1; as part of the cytosolic iron-sulfur (Fe-S) protein assembly (CIA) machinery. Interacts with DCPS. The cofactor is FAD. FMN is required as a cofactor. Low expression in brain, heart, kidney, pancreas, prostate and skeletal muscle. Highest levels in the placenta. Expressed in cancer cell lines including promyelocytic leukemia, HeLaS3, chronic myelagenous leukemia, lymphoblastic leukemia, Burkitt's lymphoma, colorectal adenocarcinoma, lung carcinoma, and melanoma G-361.

It is found in the cytoplasm. The protein resides in the perinuclear region. It catalyses the reaction 2 oxidized [2Fe-2S]-[protein] + NADPH = 2 reduced [2Fe-2S]-[protein] + NADP(+) + H(+). NADPH-dependent reductase which is a central component of the cytosolic iron-sulfur (Fe-S) protein assembly (CIA) machinery. Transfers electrons from NADPH via its FAD and FMN prosthetic groups to the [2Fe-2S] cluster of CIAPIN1, another key component of the CIA machinery. In turn, this reduced cluster provides electrons for assembly of cytosolic iron-sulfur cluster proteins. It can also reduce the [2Fe-2S] cluster of CISD1 and activate this protein implicated in Fe/S cluster repair. In vitro can fully activate methionine synthase/MTR in the presence of soluble cytochrome b5/CYB5A. The chain is NADPH-dependent diflavin oxidoreductase 1 from Homo sapiens (Human).